Here is a 704-residue protein sequence, read N- to C-terminus: Elongation factor G (704 aa).

In terms of domain architecture, tr-type G spans 10–290 (KKVRNIGIMA…AVVDYLPSPL (281 aa)). GTP contacts are provided by residues 19–26 (AHIDAGKT), 83–87 (DTPGH), and 137–140 (NKMD).

This sequence belongs to the TRAFAC class translation factor GTPase superfamily. Classic translation factor GTPase family. EF-G/EF-2 subfamily.

It is found in the cytoplasm. Its function is as follows. Catalyzes the GTP-dependent ribosomal translocation step during translation elongation. During this step, the ribosome changes from the pre-translocational (PRE) to the post-translocational (POST) state as the newly formed A-site-bound peptidyl-tRNA and P-site-bound deacylated tRNA move to the P and E sites, respectively. Catalyzes the coordinated movement of the two tRNA molecules, the mRNA and conformational changes in the ribosome. The polypeptide is Elongation factor G (Kocuria rhizophila (strain ATCC 9341 / DSM 348 / NBRC 103217 / DC2201)).